A 226-amino-acid polypeptide reads, in one-letter code: PKHD-type hydroxylase PP_0862 (226 aa).

Positions 78 to 178 constitute a Fe2OG dioxygenase domain; sequence KVFPPLINCY…RYAAFFWTQS (101 aa). Histidine 96, aspartate 98, and histidine 159 together coordinate Fe cation. Arginine 169 is a 2-oxoglutarate binding site.

It depends on Fe(2+) as a cofactor. L-ascorbate is required as a cofactor.

The protein is PKHD-type hydroxylase PP_0862 of Pseudomonas putida (strain ATCC 47054 / DSM 6125 / CFBP 8728 / NCIMB 11950 / KT2440).